The chain runs to 248 residues: Granzyme F (248 aa).

The first 18 residues, 1 to 18 (MPPILILLTLLLPLRAGA), serve as a signal peptide directing secretion. Positions 19–20 (EE) are excised as a propeptide. A Peptidase S1 domain is found at 21–246 (IIGGHEVKPH…YLPWISRNMK (226 aa)). The cysteines at positions 50 and 66 are disulfide-linked. His-65 (charge relay system) is an active-site residue. Asn-106 carries N-linked (GlcNAc...) asparagine glycosylation. Asp-109 functions as the Charge relay system in the catalytic mechanism. 2 cysteine pairs are disulfide-bonded: Cys-143-Cys-210 and Cys-175-Cys-189. Residue Asn-154 is glycosylated (N-linked (GlcNAc...) asparagine). Ser-204 (charge relay system) is an active-site residue. N-linked (GlcNAc...) asparagine glycosylation occurs at Asn-223.

This sequence belongs to the peptidase S1 family. Granzyme subfamily.

It localises to the cytolytic granule. Its function is as follows. This enzyme is probably necessary for target cell lysis in cell-mediated immune responses. This is Granzyme F (Gzmf) from Mus musculus (Mouse).